The chain runs to 324 residues: IDS-like terpene synthase 3 (324 aa).

Mg(2+) is bound by residues D77 and D81.

The protein belongs to the FPP/GGPP synthase family. The cofactor is Mg(2+).

It catalyses the reaction (2E)-geranyl diphosphate + H2O = linalool + diphosphate. The catalysed reaction is (2E,6E)-farnesyl diphosphate + H2O = (6E)-nerolidol + diphosphate. In terms of biological role, terpene synthase that shows monoterpene synthase activity and produces linalool, using geranyl diphosphate (GPP) as substrate. Also shows sesquiterpene synthase activity as it is able to convert farnesyl diphosphate (FPP) into (E)-nerolidol. This chain is IDS-like terpene synthase 3, found in Melampsora lini (Rust fungus).